Here is a 537-residue protein sequence, read N- to C-terminus: Phosphoenolpyruvate carboxykinase (ATP) (537 aa).

Residues R61, Y194, and K200 each contribute to the substrate site. Residues K200, H219, and G235 to T243 contribute to the ATP site. 2 residues coordinate Mn(2+): K200 and H219. D256 lines the Mn(2+) pocket. Residues E284, R322, and T448 each coordinate ATP. R322 contributes to the substrate binding site.

Belongs to the phosphoenolpyruvate carboxykinase (ATP) family. Mn(2+) is required as a cofactor.

It is found in the cytoplasm. The enzyme catalyses oxaloacetate + ATP = phosphoenolpyruvate + ADP + CO2. It functions in the pathway carbohydrate biosynthesis; gluconeogenesis. Its function is as follows. Involved in the gluconeogenesis. Catalyzes the conversion of oxaloacetate (OAA) to phosphoenolpyruvate (PEP) through direct phosphoryl transfer between the nucleoside triphosphate and OAA. This chain is Phosphoenolpyruvate carboxykinase (ATP), found in Bradyrhizobium sp. (strain BTAi1 / ATCC BAA-1182).